We begin with the raw amino-acid sequence, 257 residues long: Lipid A 4'-phosphatase (257 aa).

6 consecutive transmembrane segments (helical) span residues 21–41 (FGAF…FRAF), 85–105 (IFFR…IECY), 119–139 (KLKV…NVIL), 174–194 (CSFV…LLFV), 201–221 (ALVP…LSFG), and 225–245 (LSDV…LLAL).

The protein belongs to the lipid A LpxF 4'-phosphatase family.

The protein localises to the cell inner membrane. The protein operates within bacterial outer membrane biogenesis; LPS lipid A biosynthesis. Probably removes the 4'-phosphate moiety from lipid A species. Not seen to act on other membrane components, nor does it dephosphorylate the 1-phosphate group of lipid A and/or lipid A precursors. The polypeptide is Lipid A 4'-phosphatase (Rhizobium etli (strain ATCC 51251 / DSM 11541 / JCM 21823 / NBRC 15573 / CFN 42)).